Reading from the N-terminus, the 275-residue chain is Phosphate import ATP-binding protein PstB (275 aa).

One can recognise an ABC transporter domain in the interval Leu-29–Ile-270. Gly-61–Ser-68 is an ATP binding site.

Belongs to the ABC transporter superfamily. Phosphate importer (TC 3.A.1.7) family. The complex is composed of two ATP-binding proteins (PstB), two transmembrane proteins (PstC and PstA) and a solute-binding protein (PstS).

Its subcellular location is the cell inner membrane. It catalyses the reaction phosphate(out) + ATP + H2O = ADP + 2 phosphate(in) + H(+). Its function is as follows. Part of the ABC transporter complex PstSACB involved in phosphate import. Responsible for energy coupling to the transport system. The protein is Phosphate import ATP-binding protein PstB of Pseudoalteromonas translucida (strain TAC 125).